A 216-amino-acid chain; its full sequence is Molybdenum cofactor guanylyltransferase (216 aa).

Residues 16–18 (LAG), Lys28, Asn57, Asp73, and Asp108 each bind GTP. Asp108 is a Mg(2+) binding site.

This sequence belongs to the MobA family. In terms of assembly, monomer. Requires Mg(2+) as cofactor.

The protein resides in the cytoplasm. It catalyses the reaction Mo-molybdopterin + GTP + H(+) = Mo-molybdopterin guanine dinucleotide + diphosphate. Its function is as follows. Transfers a GMP moiety from GTP to Mo-molybdopterin (Mo-MPT) cofactor (Moco or molybdenum cofactor) to form Mo-molybdopterin guanine dinucleotide (Mo-MGD) cofactor. This Rhizobium rhizogenes (strain K84 / ATCC BAA-868) (Agrobacterium radiobacter) protein is Molybdenum cofactor guanylyltransferase.